Consider the following 139-residue polypeptide: Nucleoside diphosphate kinase (139 aa).

Residues Lys11, Phe59, Arg87, Thr93, Arg104, and Asn114 each contribute to the ATP site. Catalysis depends on His117, which acts as the Pros-phosphohistidine intermediate.

Belongs to the NDK family. Homotetramer. Mg(2+) serves as cofactor.

The protein localises to the cytoplasm. It catalyses the reaction a 2'-deoxyribonucleoside 5'-diphosphate + ATP = a 2'-deoxyribonucleoside 5'-triphosphate + ADP. The catalysed reaction is a ribonucleoside 5'-diphosphate + ATP = a ribonucleoside 5'-triphosphate + ADP. Its function is as follows. Major role in the synthesis of nucleoside triphosphates other than ATP. The ATP gamma phosphate is transferred to the NDP beta phosphate via a ping-pong mechanism, using a phosphorylated active-site intermediate. The polypeptide is Nucleoside diphosphate kinase (Coxiella burnetii (strain CbuK_Q154) (Coxiella burnetii (strain Q154))).